The sequence spans 270 residues: Formamidopyrimidine-DNA glycosylase (270 aa).

The active-site Schiff-base intermediate with DNA is proline 2. Residue glutamate 3 is the Proton donor of the active site. The active-site Proton donor; for beta-elimination activity is lysine 57. Positions 90, 109, and 151 each coordinate DNA. An FPG-type zinc finger spans residues 236 to 270 (RVYGRKGQACEVCESEIQSVTLGQRNTFFCEQCQK). The active-site Proton donor; for delta-elimination activity is the arginine 260.

It belongs to the FPG family. As to quaternary structure, monomer. Zn(2+) serves as cofactor.

The enzyme catalyses Hydrolysis of DNA containing ring-opened 7-methylguanine residues, releasing 2,6-diamino-4-hydroxy-5-(N-methyl)formamidopyrimidine.. The catalysed reaction is 2'-deoxyribonucleotide-(2'-deoxyribose 5'-phosphate)-2'-deoxyribonucleotide-DNA = a 3'-end 2'-deoxyribonucleotide-(2,3-dehydro-2,3-deoxyribose 5'-phosphate)-DNA + a 5'-end 5'-phospho-2'-deoxyribonucleoside-DNA + H(+). Involved in base excision repair of DNA damaged by oxidation or by mutagenic agents. Acts as a DNA glycosylase that recognizes and removes damaged bases. Has a preference for oxidized purines, such as 7,8-dihydro-8-oxoguanine (8-oxoG). Has AP (apurinic/apyrimidinic) lyase activity and introduces nicks in the DNA strand. Cleaves the DNA backbone by beta-delta elimination to generate a single-strand break at the site of the removed base with both 3'- and 5'-phosphates. This is Formamidopyrimidine-DNA glycosylase from Pseudoalteromonas atlantica (strain T6c / ATCC BAA-1087).